We begin with the raw amino-acid sequence, 567 residues long: Low-affinity glucose transporter (567 aa).

Over residues 1 to 24 (MSNQMTDSTSAGSGTEHSVDTNTA) the composition is skewed to polar residues. Residues 1-36 (MSNQMTDSTSAGSGTEHSVDTNTALKAGSPNDLKVS) form a disordered region. At 18 to 62 (SVDTNTALKAGSPNDLKVSHEEDLNDLEKTAEETLQQKPAKEYIF) the chain is on the cytoplasmic side. A helical transmembrane segment spans residues 63–83 (VSLCCVMVAFGGFVFGWDTGT). Residues 84–113 (ISGFVNQTDFLRRFGQEKADGSHYLSNVRT) are Extracellular-facing. N89 carries N-linked (GlcNAc...) asparagine glycosylation. A helical transmembrane segment spans residues 114–134 (GLIVSIFNIGCAVGGIVLSNI). The Cytoplasmic portion of the chain corresponds to 135-141 (GDRWGRR). Residues 142 to 162 (IGLITVIIIYVIGIIIQIASV) form a helical membrane-spanning segment. Residues 163-167 (DKWYQ) are Extracellular-facing. Residues 168–188 (YFIGRIISGLGVGGITVLSPM) traverse the membrane as a helical segment. At 189–199 (LISETAPKHLR) the chain is on the cytoplasmic side. The chain crosses the membrane as a helical span at residues 200–220 (GTLVSCYQLMITFGIFLGYCT). Residues 221 to 234 (NYGTKNYSNSVQWR) are Extracellular-facing. A helical membrane pass occupies residues 235 to 255 (VPLGLCFAWAIFMVLGMMFVP). The Cytoplasmic portion of the chain corresponds to 256 to 334 (ESARFLVETD…MGIMIQSLQQ (79 aa)). The helical transmembrane segment at 335-354 (LTGDNYFFYYGTTIFQSVGM) threads the bilayer. Residues 355-358 (DDSF) are Extracellular-facing. Residues 359–379 (ETSIVLGIVNFASTFFALYTV) form a helical membrane-spanning segment. Over 380 to 386 (DHFGRRN) the chain is Cytoplasmic. Residues 387–407 (CLLYGCVGMVACYVVYASVGV) traverse the membrane as a helical segment. The Extracellular portion of the chain corresponds to 408–429 (TRLWPDGPDHPDISSKGAGNCM). Residues 430-450 (IVFACFYIFCFATTWAPIAYV) form a helical membrane-spanning segment. Residues 451 to 466 (VISESYPLRVKGKAMA) lie on the Cytoplasmic side of the membrane. A helical membrane pass occupies residues 467–487 (IASASNWIWGFLIGFFTPFIT). Over 488 to 493 (SAIHFY) the chain is Extracellular. A helical membrane pass occupies residues 494 to 514 (YGYVFMGCMVFAFFYVYFFVP). Residues 515–567 (ETKGLTLEEVNEMYSEGVLPWKSSSWVPSSRRGAEYDVDALQHDDKPWYKAML) lie on the Cytoplasmic side of the membrane.

Belongs to the major facilitator superfamily. Sugar transporter (TC 2.A.1.1) family.

The protein localises to the membrane. Functionally, low-affinity glucose transporter. In Kluyveromyces lactis (strain ATCC 8585 / CBS 2359 / DSM 70799 / NBRC 1267 / NRRL Y-1140 / WM37) (Yeast), this protein is Low-affinity glucose transporter (RAG1).